Here is a 296-residue protein sequence, read N- to C-terminus: NAD kinase (296 aa).

Asp-72 (proton acceptor) is an active-site residue. Residues 72 to 73 (DG), 146 to 147 (ND), Arg-157, Lys-174, Asp-176, 187 to 192 (TAYALS), and Gln-247 each bind NAD(+).

The protein belongs to the NAD kinase family. A divalent metal cation is required as a cofactor.

It localises to the cytoplasm. It carries out the reaction NAD(+) + ATP = ADP + NADP(+) + H(+). Functionally, involved in the regulation of the intracellular balance of NAD and NADP, and is a key enzyme in the biosynthesis of NADP. Catalyzes specifically the phosphorylation on 2'-hydroxyl of the adenosine moiety of NAD to yield NADP. This is NAD kinase from Pseudomonas fluorescens (strain ATCC BAA-477 / NRRL B-23932 / Pf-5).